Here is a 126-residue protein sequence, read N- to C-terminus: MAVPEELKYSKEHEWVKVEGDTVTIGITEYAQGELGDIVFVELPETEDDIEESESFGSVESVKTVSELYAPVSGSVVEINEELEDSPEFVNESPYEKAWMVKVKLNDESQLDDLLSADQYKEMIGE.

One can recognise a Lipoyl-binding domain in the interval 22-104; sequence TVTIGITEYA…YEKAWMVKVK (83 aa). The residue at position 63 (Lys63) is an N6-lipoyllysine.

It belongs to the GcvH family. The glycine cleavage system is composed of four proteins: P, T, L and H. It depends on (R)-lipoate as a cofactor.

The glycine cleavage system catalyzes the degradation of glycine. The H protein shuttles the methylamine group of glycine from the P protein to the T protein. Its function is as follows. Is also involved in protein lipoylation via its role as an octanoyl/lipoyl carrier protein intermediate. The polypeptide is Glycine cleavage system H protein (Staphylococcus carnosus (strain TM300)).